Consider the following 464-residue polypeptide: Sugar transporter ERD6-like 1 (464 aa).

The next 12 membrane-spanning stretches (helical) occupy residues 23–43 (ITCGLLLSTSVAVTGSFVYGC), 72–92 (VMTLGGMITAAFSGKIAAVIG), 95–115 (QTMWIADVFCIFGWLAVAFAH), 125–145 (GFLGFGVGLISYVVPVYIAEI), 156–176 (FSNQLLQSFGISLMFFTGNFF), 180–200 (TLALLSAIPCGIQMICLFFIP), 263–283 (LIIGLGLMLLQQFCGSSAISA), 298–318 (IGTSILAVILVPQSIIVMFAV), 326–346 (LLMSSSIGLCICSFLIGLSYY), 359–379 (PILIVGLVGYVLSFGIGLGGL), 399–419 (LVTVSNWFFSWIIIFSFNFMM), and 424–444 (FGTYFIFAGVSLMSFVFVWTL).

The protein belongs to the major facilitator superfamily. Sugar transporter (TC 2.A.1.1) family.

The protein resides in the membrane. Functionally, sugar transporter. This Arabidopsis thaliana (Mouse-ear cress) protein is Sugar transporter ERD6-like 1 (SUGTL4).